We begin with the raw amino-acid sequence, 729 residues long: Fatty acid oxidation complex subunit alpha (729 aa).

The enoyl-CoA hydratase/isomerase stretch occupies residues 1–189 (MLYKGDTLYL…KIGLVDGVVK (189 aa)). Residue Asp-296 participates in substrate binding. The tract at residues 311–729 (ETPKQAAVLG…ARPVGDLKTA (419 aa)) is 3-hydroxyacyl-CoA dehydrogenase. NAD(+)-binding positions include Met-324, Asp-343, 400 to 402 (VVE), Lys-407, and Ser-429. Catalysis depends on His-450, which acts as the For 3-hydroxyacyl-CoA dehydrogenase activity. Asn-453 serves as a coordination point for NAD(+). Residues Asn-500 and Tyr-660 each contribute to the substrate site. The tract at residues 708-729 (RHNEPYYPPVEPARPVGDLKTA) is disordered.

In the N-terminal section; belongs to the enoyl-CoA hydratase/isomerase family. This sequence in the C-terminal section; belongs to the 3-hydroxyacyl-CoA dehydrogenase family. Heterotetramer of two alpha chains (FadB) and two beta chains (FadA).

It carries out the reaction a (3S)-3-hydroxyacyl-CoA + NAD(+) = a 3-oxoacyl-CoA + NADH + H(+). The enzyme catalyses a (3S)-3-hydroxyacyl-CoA = a (2E)-enoyl-CoA + H2O. The catalysed reaction is a 4-saturated-(3S)-3-hydroxyacyl-CoA = a (3E)-enoyl-CoA + H2O. It catalyses the reaction (3S)-3-hydroxybutanoyl-CoA = (3R)-3-hydroxybutanoyl-CoA. It carries out the reaction a (3Z)-enoyl-CoA = a 4-saturated (2E)-enoyl-CoA. The enzyme catalyses a (3E)-enoyl-CoA = a 4-saturated (2E)-enoyl-CoA. It functions in the pathway lipid metabolism; fatty acid beta-oxidation. In terms of biological role, involved in the aerobic and anaerobic degradation of long-chain fatty acids via beta-oxidation cycle. Catalyzes the formation of 3-oxoacyl-CoA from enoyl-CoA via L-3-hydroxyacyl-CoA. It can also use D-3-hydroxyacyl-CoA and cis-3-enoyl-CoA as substrate. The protein is Fatty acid oxidation complex subunit alpha of Citrobacter koseri (strain ATCC BAA-895 / CDC 4225-83 / SGSC4696).